A 1066-amino-acid chain; its full sequence is E3 ubiquitin-protein ligase PDZRN3 (1066 aa).

The RING-type; degenerate zinc-finger motif lies at 18 to 56; that stretch reads CALCHKVLEDPLTTPCGHVFCAGCVLPWVVQEGSCPARC. The TRAF-type zinc-finger motif lies at 100 to 158; it reads EHLERCDFAPARCRHAGCGQVLLRRDVEAHMRDACDARPVGRCQEGCGLPLTHGEQRAG. 2 consecutive PDZ domains span residues 249-339 and 419-503; these read TLVL…LRRT and EVDL…IARP. S427 is modified (phosphoserine). A disordered region spans residues 545–603; that stretch reads QKKHDEDGGTTDTATILSNQHEKDSGVGRTDESTRNDESSEQENNGDDATASSNPLAGQ. Residues 554–563 show a composition bias toward polar residues; it reads TTDTATILSN. The segment covering 564 to 582 has biased composition (basic and acidic residues); the sequence is QHEKDSGVGRTDESTRNDE. Positions 594–603 are enriched in polar residues; it reads TASSNPLAGQ. Positions 679 to 704 form a coiled coil; that stretch reads ESVDKELELLNEELRSIELECLSIVR. A compositionally biased stretch (basic and acidic residues) spans 744–754; it reads TELPEKSDKDS. Disordered stretches follow at residues 744–778 and 808–863; these read TELP…PDNS and LLSI…LPSY. 2 stretches are compositionally biased toward polar residues: residues 755–769 and 845–855; these read SSAY…STPL and GSRSPTPSQKL. Residues 975–1025 are a coiled coil; it reads KEERKQHLVKAKEQRRRREFMMQSRLDCLKEQQAADDRKEMNILELSHKKM.

In terms of assembly, interacts with NLGN1 and EFNB2. Interacts with UBE2D2 and with MUSK via the first PDZ domain. Auto-ubiquitinated. As to expression, widely expressed, including in the heart, skeletal muscle and liver and, at lower levels, in the brain, colon, small intestine, placenta and lung. Down-regulated in ovarian serous papillary tumors.

Its subcellular location is the synapse. It localises to the cytoplasm. The enzyme catalyses S-ubiquitinyl-[E2 ubiquitin-conjugating enzyme]-L-cysteine + [acceptor protein]-L-lysine = [E2 ubiquitin-conjugating enzyme]-L-cysteine + N(6)-ubiquitinyl-[acceptor protein]-L-lysine.. It functions in the pathway protein modification; protein ubiquitination. Its function is as follows. E3 ubiquitin-protein ligase. Plays an important role in regulating the surface level of MUSK on myotubes. Mediates the ubiquitination of MUSK, promoting its endocytosis and lysosomal degradation. Might contribute to terminal myogenic differentiation. The polypeptide is E3 ubiquitin-protein ligase PDZRN3 (PDZRN3) (Homo sapiens (Human)).